The chain runs to 187 residues: Ion-translocating oxidoreductase complex subunit B (187 aa).

Residues 1–23 (MIAAAASMSALGLGLGYLLGAAA) are hydrophobic. Residues 29–88 (ETPPIVEEIAKILPGTNCGACGFPGCNGLAEAMAEGNAPVTACTPGGRDVALALAEIVTV) enclose the 4Fe-4S domain. The [4Fe-4S] cluster site is built by cysteine 46, cysteine 49, cysteine 54, cysteine 71, cysteine 112, cysteine 115, cysteine 118, cysteine 122, cysteine 142, cysteine 145, cysteine 148, and cysteine 152. 4Fe-4S ferredoxin-type domains are found at residues 103-132 (MVAF…GGAK) and 133-162 (QIHT…SRVK).

It belongs to the 4Fe4S bacterial-type ferredoxin family. RnfB subfamily. The complex is composed of six subunits: RnfA, RnfB, RnfC, RnfD, RnfE and RnfG. [4Fe-4S] cluster is required as a cofactor.

It is found in the cellular chromatophore membrane. In terms of biological role, part of a membrane-bound complex that couples electron transfer with translocation of ions across the membrane. Required for nitrogen fixation. Involved in electron transfer to nitrogenase. In Rhodobacter capsulatus (Rhodopseudomonas capsulata), this protein is Ion-translocating oxidoreductase complex subunit B.